The sequence spans 272 residues: Glutamate racemase (272 aa).

Residues 16-17 and 48-49 contribute to the substrate site; these read DS and YG. Cysteine 79 functions as the Proton donor/acceptor in the catalytic mechanism. 80-81 is a substrate binding site; it reads NT. Cysteine 191 functions as the Proton donor/acceptor in the catalytic mechanism. 192 to 193 serves as a coordination point for substrate; the sequence is TH.

Belongs to the aspartate/glutamate racemases family.

It catalyses the reaction L-glutamate = D-glutamate. The protein operates within cell wall biogenesis; peptidoglycan biosynthesis. Functionally, provides the (R)-glutamate required for cell wall biosynthesis. The polypeptide is Glutamate racemase (Chlorobaculum parvum (strain DSM 263 / NCIMB 8327) (Chlorobium vibrioforme subsp. thiosulfatophilum)).